The sequence spans 336 residues: Holliday junction branch migration complex subunit RuvB (336 aa).

Residues 4–184 form a large ATPase domain (RuvB-L) region; that stretch reads ADRLISAGAT…FGIVQRLEFY (181 aa). Residues isoleucine 23, arginine 24, glycine 65, lysine 68, threonine 69, threonine 70, 131 to 133, arginine 174, tyrosine 184, and arginine 221 each bind ATP; that span reads EDY. Threonine 69 lines the Mg(2+) pocket. The small ATPAse domain (RuvB-S) stretch occupies residues 185-255; it reads QVPDLQHIVG…IAAQALDMLN (71 aa). The head domain (RuvB-H) stretch occupies residues 258 to 336; the sequence is AEGFDYMDRK…HFGITPPEMP (79 aa). DNA-binding residues include arginine 294, arginine 313, and arginine 318.

It belongs to the RuvB family. As to quaternary structure, homohexamer. Forms an RuvA(8)-RuvB(12)-Holliday junction (HJ) complex. HJ DNA is sandwiched between 2 RuvA tetramers; dsDNA enters through RuvA and exits via RuvB. An RuvB hexamer assembles on each DNA strand where it exits the tetramer. Each RuvB hexamer is contacted by two RuvA subunits (via domain III) on 2 adjacent RuvB subunits; this complex drives branch migration. In the full resolvosome a probable DNA-RuvA(4)-RuvB(12)-RuvC(2) complex forms which resolves the HJ.

It localises to the cytoplasm. It carries out the reaction ATP + H2O = ADP + phosphate + H(+). In terms of biological role, the RuvA-RuvB-RuvC complex processes Holliday junction (HJ) DNA during genetic recombination and DNA repair, while the RuvA-RuvB complex plays an important role in the rescue of blocked DNA replication forks via replication fork reversal (RFR). RuvA specifically binds to HJ cruciform DNA, conferring on it an open structure. The RuvB hexamer acts as an ATP-dependent pump, pulling dsDNA into and through the RuvAB complex. RuvB forms 2 homohexamers on either side of HJ DNA bound by 1 or 2 RuvA tetramers; 4 subunits per hexamer contact DNA at a time. Coordinated motions by a converter formed by DNA-disengaged RuvB subunits stimulates ATP hydrolysis and nucleotide exchange. Immobilization of the converter enables RuvB to convert the ATP-contained energy into a lever motion, pulling 2 nucleotides of DNA out of the RuvA tetramer per ATP hydrolyzed, thus driving DNA branch migration. The RuvB motors rotate together with the DNA substrate, which together with the progressing nucleotide cycle form the mechanistic basis for DNA recombination by continuous HJ branch migration. Branch migration allows RuvC to scan DNA until it finds its consensus sequence, where it cleaves and resolves cruciform DNA. In Salmonella agona (strain SL483), this protein is Holliday junction branch migration complex subunit RuvB.